The following is a 416-amino-acid chain: MYRPVIASRKSIPPWLIILCVLGVLAALGIIIGLLVHFLAVENKIYYYQGGFKVLDIPYDRNYERETSLESNYLSKILENKMVEAFQNSNIYKQYINSQVITLVPDNNSVTAHIWLVFKDPWSNKENLRRRIESILRQMLENNPESLTTDPGSLKLTEISKVDAEKIINNRCGRRPRMSATYDRITGGSTAHKGEWPWQASLRVNGKHYCGASLIGERFLLTAAHCFQGTNNPKNLTVSFGTRVTPAYMQHSVQEIIIHEDYVKGEHHDDVAVIKLTEKVSFNNDVHRVCLPESTQIFPPGEGVVVTGWGSFSYNGKSPLLLQKASIKIIDTNTCNSEEAYGGRIVDTMLCAGYLEGSIDACQGDSGGPLVHPNSRDIWYLVGIVSWGHECGRVNKPGVYMRVTSYRNWIASKTGI.

The Cytoplasmic portion of the chain corresponds to 1-15 (MYRPVIASRKSIPPW). Residues 16–36 (LIILCVLGVLAALGIIIGLLV) form a helical; Signal-anchor for type II membrane protein membrane-spanning segment. The Extracellular portion of the chain corresponds to 37-416 (HFLAVENKIY…RNWIASKTGI (380 aa)). Residues 44-161 (KIYYYQGGFK…GSLKLTEISK (118 aa)) enclose the SEA domain. Residue Asn-107 is glycosylated (N-linked (GlcNAc...) asparagine). The region spanning 185-415 (ITGGSTAHKG…YRNWIASKTG (231 aa)) is the Peptidase S1 domain. A disulfide bridge links Cys-210 with Cys-226. The active-site Charge relay system is His-225. Residue Asn-235 is glycosylated (N-linked (GlcNAc...) asparagine). Asp-270 (charge relay system) is an active-site residue. Disulfide bonds link Cys-335-Cys-351 and Cys-362-Cys-391. Residue Ser-366 is the Charge relay system of the active site.

Belongs to the peptidase S1 family. Expressed in esophagus, cervix, tongue, and testes.

Its subcellular location is the cell membrane. Inhibited by aprotinin, leupeptin, benzamidine, SERPINA1, SPINT1 and SPINT2. In terms of biological role, serine protease. This is Transmembrane protease serine 11B-like protein (Tmprss11b) from Mus musculus (Mouse).